Here is a 115-residue protein sequence, read N- to C-terminus: Promotilin (115 aa).

An N-terminal signal peptide occupies residues Met1 to Gly25. The disordered stretch occupies residues Arg43–Gln73.

It belongs to the motilin family.

The protein resides in the secreted. Functionally, plays an important role in the regulation of interdigestive gastrointestinal motility and indirectly causes rhythmic contraction of duodenal and colonic smooth muscle. In Ovis aries (Sheep), this protein is Promotilin (MLN).